A 279-amino-acid chain; its full sequence is Ribonuclease Z (279 aa).

The Zn(2+) site is built by histidine 64, histidine 66, aspartate 68, histidine 69, histidine 134, aspartate 191, and histidine 245. The Proton acceptor role is filled by aspartate 68.

The protein belongs to the RNase Z family. Homodimer. Zn(2+) is required as a cofactor.

The enzyme catalyses Endonucleolytic cleavage of RNA, removing extra 3' nucleotides from tRNA precursor, generating 3' termini of tRNAs. A 3'-hydroxy group is left at the tRNA terminus and a 5'-phosphoryl group is left at the trailer molecule.. Its function is as follows. Zinc phosphodiesterase, which displays some tRNA 3'-processing endonuclease activity. Probably involved in tRNA maturation, by removing a 3'-trailer from precursor tRNA. This Methanopyrus kandleri (strain AV19 / DSM 6324 / JCM 9639 / NBRC 100938) protein is Ribonuclease Z.